Consider the following 435-residue polypeptide: Angio-associated migratory cell protein (435 aa).

Positions methionine 1–glycine 65 are disordered. Serine 20 bears the Phosphoserine mark. The segment covering aspartate 39–glutamate 63 has biased composition (acidic residues). WD repeat units lie at residues leucine 90–glutamate 130, glycine 133–serine 172, glutamate 174–glutamine 213, proline 215–lysine 255, glycine 259–arginine 300, serine 316–glutamine 355, glutamine 357–aspartate 396, and glycine 399–aspartate 434.

Its subcellular location is the cell membrane. The protein localises to the cytoplasm. Its function is as follows. Plays a role in angiogenesis and cell migration. In smooth muscle cell migration, may act through the RhoA pathway. The sequence is that of Angio-associated migratory cell protein (AAMP) from Canis lupus familiaris (Dog).